Consider the following 760-residue polypeptide: BMP/retinoic acid-inducible neural-specific protein 1 (760 aa).

Positions methionine 1–glycine 16 are cleaved as a signal peptide. In terms of domain architecture, MACPF spans arginine 68 to methionine 251. N-linked (GlcNAc...) asparagine glycosylation is found at asparagine 156, asparagine 433, asparagine 443, asparagine 553, asparagine 599, asparagine 630, and asparagine 676.

It belongs to the BRINP family.

The protein resides in the cytoplasm. Plays a role in neurogenesis and brain development. May suppress cell cycle progression in postmitotic neurons by inhibiting G1/S transition. The sequence is that of BMP/retinoic acid-inducible neural-specific protein 1 (Brinp1) from Rattus norvegicus (Rat).